We begin with the raw amino-acid sequence, 123 residues long: Photosystem II extrinsic protein U (123 aa).

The first 28 residues, 1-28, serve as a signal peptide directing secretion; it reads MKTLARILVVFTLIVGLIGFFNPLPAQA.

The protein belongs to the PsbU family. As to quaternary structure, PSII is composed of 1 copy each of membrane proteins PsbA, PsbB, PsbC, PsbD, PsbE, PsbF, PsbH, PsbI, PsbJ, PsbK, PsbL, PsbM, PsbT, PsbX, PsbY, PsbZ, Psb30/Ycf12, peripheral proteins PsbO, CyanoQ (PsbQ), PsbU, PsbV and a large number of cofactors. It forms dimeric complexes.

The protein resides in the cellular thylakoid membrane. One of the extrinsic, lumenal subunits of photosystem II (PSII). PSII is a light-driven water plastoquinone oxidoreductase, using light energy to abstract electrons from H(2)O, generating a proton gradient subsequently used for ATP formation. The extrinsic proteins stabilize the structure of photosystem II oxygen-evolving complex (OEC), the ion environment of oxygen evolution and protect the OEC against heat-induced inactivation. The protein is Photosystem II extrinsic protein U of Gloeothece citriformis (strain PCC 7424) (Cyanothece sp. (strain PCC 7424)).